The primary structure comprises 295 residues: MTDYLVRAIAKSGSVRALVCVTTATVGEICKRHDTLPTATAALGRGITAGALMGSLVKTGQRVALRFEGNGPLKKIVIEADANGSVRGYVGDPKVHLLRPDGALDVNNALGRAGFLTVAKDLGLKEPYRGTVQLYTSGIAEDLALYLVESEQIPSAVGIAEFIEQDGTVAAVGGFLIQAVPPVDPLVVEELMTRIEQLPPLSELLHEGGNPEQILEQLLAGIPYDILEKRNIAFACSCSRERIERVLLSMGKKELSSMKKDQHGSEVTCEFCGERYLFDEADLDRIIAEIAKQES.

Cystine bridges form between Cys-236-Cys-238 and Cys-269-Cys-272.

It belongs to the HSP33 family. In terms of processing, under oxidizing conditions two disulfide bonds are formed involving the reactive cysteines. Under reducing conditions zinc is bound to the reactive cysteines and the protein is inactive.

It is found in the cytoplasm. Redox regulated molecular chaperone. Protects both thermally unfolding and oxidatively damaged proteins from irreversible aggregation. Plays an important role in the bacterial defense system toward oxidative stress. This is 33 kDa chaperonin from Geobacter sp. (strain M21).